The following is a 446-amino-acid chain: C4-dicarboxylate transport protein (446 aa).

Helical transmembrane passes span 25–45 (VQVL…PAIG), 58–78 (LVKM…IASI), 93–113 (FAYF…VANV), 159–179 (ALTE…GLAL), 199–219 (VFFG…FGAM), 236–256 (LLIA…LGAV), 322–342 (IYMT…LSLG), 370–390 (AATL…ILGI), and 400–420 (LTNF…EKGL).

This sequence belongs to the dicarboxylate/amino acid:cation symporter (DAACS) (TC 2.A.23) family.

The protein localises to the cell inner membrane. Its function is as follows. Responsible for the transport of dicarboxylates such as succinate, fumarate, and malate from the periplasm across the membrane. In Sphingopyxis alaskensis (strain DSM 13593 / LMG 18877 / RB2256) (Sphingomonas alaskensis), this protein is C4-dicarboxylate transport protein.